The following is a 507-amino-acid chain: Probable allantoinase (507 aa).

Residues His105, His107, Lys195, His231, His294, and Asp368 each coordinate Zn(2+). Lys195 bears the N6-carboxylysine mark.

Belongs to the metallo-dependent hydrolases superfamily. Allantoinase family. As to quaternary structure, homotetramer. Zn(2+) is required as a cofactor. In terms of processing, carboxylation allows a single lysine to coordinate two zinc ions.

It carries out the reaction (S)-allantoin + H2O = allantoate + H(+). The protein operates within nitrogen metabolism; (S)-allantoin degradation; allantoate from (S)-allantoin: step 1/1. In terms of biological role, catalyzes the conversion of allantoin (5-ureidohydantoin) to allantoate by hydrolytic cleavage of the five-member hydantoin ring. Catalyzes the first step of the ureide allantoin degradation followed by the sequential activity of AAH, UGLYAH and UAH which allows a complete purine breakdown without the intermediate generation of urea. The chain is Probable allantoinase (ALN) from Oryza sativa subsp. japonica (Rice).